The sequence spans 403 residues: Propionate kinase (403 aa).

Belongs to the acetokinase family. PduW subfamily.

The protein localises to the cytoplasm. It carries out the reaction propanoate + ATP = propanoyl phosphate + ADP. It participates in polyol metabolism; 1,2-propanediol degradation. Works with phosphate acetyltransferase (pta) to capture exogenous propionate and regenerate propionyl-CoA during degradation of 1,2-propanediol (1,2-PD). The chain is Propionate kinase from Citrobacter rodentium (strain ICC168) (Citrobacter freundii biotype 4280).